The chain runs to 1002 residues: DNA-directed RNA polymerase 1, mitochondrial (1002 aa).

Residues Met-1 to Ala-21 constitute a mitochondrion transit peptide. Active-site residues include Asp-703, Lys-778, and Asp-935.

It belongs to the phage and mitochondrial RNA polymerase family. In terms of tissue distribution, the highest levels of expression are detected in the mature leaves. The level of expression is lowest in the cotyledons.

The protein resides in the mitochondrion. The enzyme catalyses RNA(n) + a ribonucleoside 5'-triphosphate = RNA(n+1) + diphosphate. Its function is as follows. DNA-dependent RNA polymerase catalyzes the transcription of DNA into RNA using the four ribonucleoside triphosphates as substrates. This Nicotiana sylvestris (Wood tobacco) protein is DNA-directed RNA polymerase 1, mitochondrial (RPOT1).